We begin with the raw amino-acid sequence, 119 residues long: Flagellar transcriptional regulator FlhD (119 aa).

It belongs to the FlhD family. Homodimer; disulfide-linked. Forms a heterohexamer composed of two FlhC and four FlhD subunits. Each FlhC binds a FlhD dimer, forming a heterotrimer, and a hexamer assembles by dimerization of two heterotrimers.

It is found in the cytoplasm. Its function is as follows. Functions in complex with FlhC as a master transcriptional regulator that regulates transcription of several flagellar and non-flagellar operons by binding to their promoter region. Activates expression of class 2 flagellar genes, including fliA, which is a flagellum-specific sigma factor that turns on the class 3 genes. Also regulates genes whose products function in a variety of physiological pathways. The chain is Flagellar transcriptional regulator FlhD from Shigella dysenteriae serotype 1 (strain Sd197).